A 448-amino-acid chain; its full sequence is C4-dicarboxylate transport protein 2 (448 aa).

9 helical membrane passes run 13 to 33, 49 to 69, 81 to 101, 149 to 169, 193 to 213, 227 to 247, 294 to 314, 335 to 355, and 357 to 377; these read SLYV…HFSP, LIKM…IAGM, LALL…LIVV, AFAK…GFAL, IVGI…AFTI, LMGA…GIVS, VVGL…SIYL, ITLL…TGSG, and IVLA…LALI.

It belongs to the dicarboxylate/amino acid:cation symporter (DAACS) (TC 2.A.23) family.

It is found in the cell inner membrane. Functionally, responsible for the transport of dicarboxylates such as succinate, fumarate, and malate from the periplasm across the membrane. This chain is C4-dicarboxylate transport protein 2, found in Polaromonas naphthalenivorans (strain CJ2).